The sequence spans 181 residues: Large ribosomal subunit protein uL6 (181 aa).

Belongs to the universal ribosomal protein uL6 family. In terms of assembly, part of the 50S ribosomal subunit.

This protein binds to the 23S rRNA, and is important in its secondary structure. It is located near the subunit interface in the base of the L7/L12 stalk, and near the tRNA binding site of the peptidyltransferase center. This chain is Large ribosomal subunit protein uL6, found in Coprothermobacter proteolyticus (strain ATCC 35245 / DSM 5265 / OCM 4 / BT).